The following is a 199-amino-acid chain: Nicotinamide riboside kinase 1 (199 aa).

Residue 10–18 (GVTNSGKTT) participates in ATP binding. Residues Thr17 and Asp36 each contribute to the Mg(2+) site. The Proton acceptor role is filled by Asp36. Residues 36–39 (DDFF) and 55–56 (YD) each bind substrate. Arg128 is an ATP binding site. Substrate contacts are provided by residues Arg129 and 134 to 135 (YQ). ATP contacts are provided by residues 132–134 (RVY) and 172–174 (KSE).

This sequence belongs to the uridine kinase family. NRK subfamily. Monomer.

The catalysed reaction is beta-nicotinamide D-riboside + ATP = beta-nicotinamide D-ribonucleotide + ADP + H(+). It carries out the reaction beta-D-ribosylnicotinate + ATP = nicotinate beta-D-ribonucleotide + ADP + H(+). It functions in the pathway cofactor biosynthesis; NAD(+) biosynthesis. In terms of biological role, catalyzes the phosphorylation of nicotinamide riboside (NR) and nicotinic acid riboside (NaR) to form nicotinamide mononucleotide (NMN) and nicotinic acid mononucleotide (NaMN). The enzyme also phosphorylates the antitumor drugs tiazofurin and 3-deazaguanosine. The protein is Nicotinamide riboside kinase 1 (NMRK1) of Homo sapiens (Human).